A 178-amino-acid chain; its full sequence is ATP-dependent protease subunit HslV (178 aa).

The active site involves T7. Na(+)-binding residues include G162, C165, and T168.

The protein belongs to the peptidase T1B family. HslV subfamily. As to quaternary structure, a double ring-shaped homohexamer of HslV is capped on each side by a ring-shaped HslU homohexamer. The assembly of the HslU/HslV complex is dependent on binding of ATP.

The protein localises to the cytoplasm. The catalysed reaction is ATP-dependent cleavage of peptide bonds with broad specificity.. With respect to regulation, allosterically activated by HslU binding. Its function is as follows. Protease subunit of a proteasome-like degradation complex believed to be a general protein degrading machinery. The polypeptide is ATP-dependent protease subunit HslV (Cupriavidus pinatubonensis (strain JMP 134 / LMG 1197) (Cupriavidus necator (strain JMP 134))).